Here is a 925-residue protein sequence, read N- to C-terminus: Glutamate receptor 3.1 (925 aa).

The signal sequence occupies residues Met1–Gly25. Residues Ala26–Thr591 lie on the Extracellular side of the membrane. 6 N-linked (GlcNAc...) asparagine glycosylation sites follow: Asn309, Asn341, Asn359, Asn419, Asn437, and Asn488. Residues Leu592–Leu612 traverse the membrane as a helical segment. At Glu613–Arg621 the chain is on the cytoplasmic side. Residues Gly622–Ser642 traverse the membrane as a helical segment. Residues His643 to Arg653 are Cytoplasmic-facing. Residues Met654–Leu674 form a helical membrane-spanning segment. Residues Thr675–Ser831 lie on the Extracellular side of the membrane. Asn738 and Asn812 each carry an N-linked (GlcNAc...) asparagine glycan. The helical transmembrane segment at Phe832–Phe852 threads the bilayer. At Lys853–Ile925 the chain is on the cytoplasmic side. The disordered stretch occupies residues Lys897 to Ile925. Residues His908 to Thr919 show a composition bias toward polar residues.

It belongs to the glutamate-gated ion channel (TC 1.A.10.1) family. In terms of assembly, may form heteromers. Expressed predominantly in roots. Firt detected in the vascular tissues of the cotyledons, and later in the vasculature of all organs. In leaves, preferentially expressed in guard cells.

Its subcellular location is the membrane. Glutamate-gated receptor that probably acts as a non-selective cation channel. May be involved in light-signal transduction and calcium homeostasis via the regulation of calcium influx into cells. Required for the long-term calcium oscillation-regulated stomatal movements. This is Glutamate receptor 3.1 (GLR3.1) from Arabidopsis thaliana (Mouse-ear cress).